The primary structure comprises 835 residues: Ubiquitin carboxyl-terminal hydrolase 26 (835 aa).

A disordered region spans residues 102-128 (SQGSIRPARSDERCGEPSTSAQELNGS). Residues 118–128 (PSTSAQELNGS) are compositionally biased toward polar residues. One can recognise a USP domain in the interval 286–816 (QGLPNVGNTC…TGYVFFYMHN (531 aa)). Cys295 functions as the Nucleophile in the catalytic mechanism. The interval 597-747 (NRESEAQSGK…TRKVDPTKLN (151 aa)) is disordered. Composition is skewed to basic and acidic residues over residues 634–652 (LTKE…RPSD) and 669–679 (KCNEGRSDKQI). The segment covering 683-708 (ALTQSRPKPISQEQTENLGKTTLSHT) has biased composition (polar residues). Low complexity predominate over residues 709–725 (QDSSQSSQSSSDSSKSS). Residues 726–747 (RCSDDLDKKAKPTRKVDPTKLN) are compositionally biased toward basic and acidic residues. The Proton acceptor role is filled by His771.

Belongs to the peptidase C19 family. In terms of assembly, interacts with RING1.

It is found in the nucleus. It localises to the cytoplasm. The protein resides in the cytoskeleton. The protein localises to the flagellum axoneme. The catalysed reaction is Thiol-dependent hydrolysis of ester, thioester, amide, peptide and isopeptide bonds formed by the C-terminal Gly of ubiquitin (a 76-residue protein attached to proteins as an intracellular targeting signal).. Deubiquitinase regulating several biological processes through the deubiquitination of components of these processes. Involved in somatic cell reprogramming through the 'Lys-48'-linked deubiquitination and stabilization of CBX4 and CBX6, two components of the polycomb-repressive complex 1 (PRC1). Also deubiquitinates and probably stabilizes the androgen receptor (AR), regulating the androgen receptor signaling pathway. May play a role in spermatogenesis. The chain is Ubiquitin carboxyl-terminal hydrolase 26 from Mus musculus (Mouse).